A 536-amino-acid chain; its full sequence is MLQNMISKDDVLASAEQLKELLPYNEENVQLIKKALILYRQDSVYRLQAVSPTEVTAYVQDVVPVRVTLNLFVIVKSGCSCPSGRICRHMLAVFLYVYAMFERVGTFTEYWLEREKLEESKELVRRQFQEKVLPNEESLSSWLAFFDSEFSLWQARTPEGSQNMQGLYYGYLSALKKHAPNKPELKSLYQIHSAIAVWLRMFTLIEAGKLNPEQDFYSLNPYVEQLMDTIYSSIDKLKTYALSFALDPFLDKTPDVIRHLLLKEEIFQYERIRVFGEIWSALLSRPKWVAREQEILKKEAGRRFSPELQFGRLHLEFLQKNDDVIFEEADQFPPEALPYTFQWLSEMTAKKDWKRLKTWYQQIEPIAMGYTKLDKPFKEIRDVIGELFLLLNAYVQQTNDQALFERFAAGCLPYTFTEYSHHLYEKKRYAEWIEIHSLVGFSINEMDKMMLKEIAASDPEALIPAYHREVAFFIDQKNRSSYKEAARYLKKLRTLYKKAKKQKVWERYIQLLSSHYKRLRALQEELQKGKLIDGES.

An SWIM-type zinc finger spans residues 71-98; it reads LFVIVKSGCSCPSGRICRHMLAVFLYVY. Residues 482-528 adopt a coiled-coil conformation; the sequence is YKEAARYLKKLRTLYKKAKKQKVWERYIQLLSSHYKRLRALQEELQK.

This is an uncharacterized protein from Bacillus subtilis (strain 168).